A 603-amino-acid chain; its full sequence is Putative ankyrin repeat protein FPV162 (603 aa).

ANK repeat units follow at residues 23-53 (FKDT…DINV), 57-87 (FKKT…NVNV), 91-120 (FEST…DPNT), 124-155 (NGQT…NVNA), 159-189 (KHNT…DVKI), 193-223 (DGIT…DVNA), 227-257 (EGNT…EVNA), 261-291 (VGDT…NVNA), 295-325 (ISVT…EVNS), 329-362 (YGRT…DIEA), 366-397 (IGGT…DINT), 401-428 (RDET…STNI), 432-467 (SNIT…DIKN), and 504-533 (NNMY…DIYL).

The protein is Putative ankyrin repeat protein FPV162 of Vertebrata (FPV).